The following is a 1079-amino-acid chain: DNA ligase 4 (1079 aa).

Residues M1 to Q20 are disordered. 10 residues coordinate ATP: E295, K297, L298, R302, E357, F395, E460, K465, K482, and K484. The active-site N6-AMP-lysine intermediate is the K297. E357 contacts Mg(2+). E460 provides a ligand contact to Mg(2+). In terms of domain architecture, BRCT 1 spans V699–L789. Positions D838–V847 are enriched in acidic residues. The tract at residues D838–Y942 is disordered. Basic and acidic residues-rich tracts occupy residues E848 to Q878 and M900 to R914. Positions D968–P1078 constitute a BRCT 2 domain.

Belongs to the ATP-dependent DNA ligase family. The cofactor is Mg(2+).

It localises to the nucleus. It catalyses the reaction ATP + (deoxyribonucleotide)n-3'-hydroxyl + 5'-phospho-(deoxyribonucleotide)m = (deoxyribonucleotide)n+m + AMP + diphosphate.. DNA ligase involved in DNA non-homologous end joining (NHEJ); required for double-strand break (DSB) repair. This is DNA ligase 4 (LIG4) from Cryptococcus neoformans var. neoformans serotype D (strain JEC21 / ATCC MYA-565) (Filobasidiella neoformans).